The chain runs to 230 residues: Ribosomal RNA small subunit methyltransferase G (230 aa).

Residues Gly74, Phe79, Ala124 to Glu125, and Arg141 contribute to the S-adenosyl-L-methionine site.

It belongs to the methyltransferase superfamily. RNA methyltransferase RsmG family.

The protein localises to the cytoplasm. In terms of biological role, specifically methylates the N7 position of a guanine in 16S rRNA. This Acholeplasma laidlawii (strain PG-8A) protein is Ribosomal RNA small subunit methyltransferase G.